We begin with the raw amino-acid sequence, 222 residues long: UPF0758 protein YicR (222 aa).

One can recognise an MPN domain in the interval 100 to 222 (PLLSPEMTRE…YVSFAERGWI (123 aa)). Zn(2+) is bound by residues His171, His173, and Asp184. The JAMM motif signature appears at 171-184 (HNHPSGCAEPSKAD).

This sequence belongs to the UPF0758 family. YicR subfamily.

The polypeptide is UPF0758 protein YicR (Escherichia coli (strain K12 / MC4100 / BW2952)).